Consider the following 249-residue polypeptide: Putative TrmH family tRNA/rRNA methyltransferase (249 aa).

S-adenosyl-L-methionine contacts are provided by Gly196, Ile216, and Leu225.

The protein belongs to the class IV-like SAM-binding methyltransferase superfamily. RNA methyltransferase TrmH family.

This Staphylococcus haemolyticus (strain JCSC1435) protein is Putative TrmH family tRNA/rRNA methyltransferase.